A 331-amino-acid chain; its full sequence is Phosphate acyltransferase (331 aa).

It belongs to the PlsX family. Homodimer. Probably interacts with PlsY.

It localises to the cytoplasm. The enzyme catalyses a fatty acyl-[ACP] + phosphate = an acyl phosphate + holo-[ACP]. It functions in the pathway lipid metabolism; phospholipid metabolism. Its function is as follows. Catalyzes the reversible formation of acyl-phosphate (acyl-PO(4)) from acyl-[acyl-carrier-protein] (acyl-ACP). This enzyme utilizes acyl-ACP as fatty acyl donor, but not acyl-CoA. The sequence is that of Phosphate acyltransferase from Wolinella succinogenes (strain ATCC 29543 / DSM 1740 / CCUG 13145 / JCM 31913 / LMG 7466 / NCTC 11488 / FDC 602W) (Vibrio succinogenes).